The sequence spans 626 residues: Probable potassium transport system protein Kup (626 aa).

13 helical membrane-spanning segments follow: residues 8–28, 44–64, 102–122, 139–159, 171–191, 196–216, 217–237, 249–269, 281–301, 339–359, 377–397, 399–419, and 421–441; these read VALP…IGTS, ISEA…TLSI, IYLI…GIIT, PAFD…LFMV, FGPI…YSII, ILWF…PFVA, FVAM…YADM, WFIV…ALLL, LLVP…AAVI, IYVP…IILF, MLCV…WPWW, VTLF…STSL, and ILSG…ILMT.

Belongs to the HAK/KUP transporter (TC 2.A.72) family.

The protein localises to the cell inner membrane. The enzyme catalyses K(+)(in) + H(+)(in) = K(+)(out) + H(+)(out). Its function is as follows. Transport of potassium into the cell. Likely operates as a K(+):H(+) symporter. This Acinetobacter baylyi (strain ATCC 33305 / BD413 / ADP1) protein is Probable potassium transport system protein Kup.